We begin with the raw amino-acid sequence, 78 residues long: Large ribosomal subunit protein uL24 (78 aa).

Residues 52 to 78 form a disordered region; the sequence is PSEKTPNGGHVNKEMPIDISNVAKVEG.

This sequence belongs to the universal ribosomal protein uL24 family. In terms of assembly, part of the 50S ribosomal subunit.

Functionally, one of two assembly initiator proteins, it binds directly to the 5'-end of the 23S rRNA, where it nucleates assembly of the 50S subunit. Its function is as follows. One of the proteins that surrounds the polypeptide exit tunnel on the outside of the subunit. The polypeptide is Large ribosomal subunit protein uL24 (Campylobacter concisus (strain 13826)).